A 50-amino-acid chain; its full sequence is Large ribosomal subunit protein bL33 (50 aa).

The protein belongs to the bacterial ribosomal protein bL33 family.

In Aquifex aeolicus (strain VF5), this protein is Large ribosomal subunit protein bL33 (rpmG).